Here is a 1509-residue protein sequence, read N- to C-terminus: DNA polymerase alpha catalytic subunit (1509 aa).

A disordered region spans residues 1–162; the sequence is MNRPKREKKS…KKTKEKKNEI (162 aa). Composition is skewed to basic and acidic residues over residues 21–35 and 42–79; these read EQIK…RTDQ and ERKR…RETS. Residues 27 to 67 adopt a coiled-coil conformation; sequence RDGEKRTDQLQEEDDERKRLEQLKEQETEFDKEERKRKNRD. Residues 80 to 123 show a composition bias toward acidic residues; that stretch reads DNEDEDEDEDDDGDNSDDDYSLDEDDEDGGGDGENNDSDQEEAI. Residues 127 to 137 are compositionally biased toward basic residues; it reads RKKKRQVKKKS. Over residues 138–147 the composition is skewed to basic and acidic residues; that stretch reads KKDENGEPKV. The segment covering 148-157 has biased composition (basic residues); sequence KTPRVKKTKE. 2 coiled-coil regions span residues 234-263 and 958-989; these read APDS…LLNK and LHGL…IQQQ. Zn(2+)-binding residues include Cys-1328, Cys-1331, Cys-1355, Cys-1358, Cys-1389, Cys-1392, Cys-1406, and Cys-1411. The segment at 1328 to 1358 adopts a CysA-type zinc-finger fold; it reads CPYCGQNNEFTGIVKIDSEGKSESGFDCNQC. The CysB motif signature appears at 1389 to 1411; sequence CTECEKVSKNYKETSYRCARPQC.

This sequence belongs to the DNA polymerase type-B family.

It localises to the nucleus. It catalyses the reaction DNA(n) + a 2'-deoxyribonucleoside 5'-triphosphate = DNA(n+1) + diphosphate. In terms of biological role, polymerase alpha in a complex with DNA primase is a replicative polymerase. The chain is DNA polymerase alpha catalytic subunit (pola1) from Dictyostelium discoideum (Social amoeba).